The primary structure comprises 460 residues: Bifunctional protein GlmU (460 aa).

Positions 1–237 (MSSNQYTAGA…DPDLLGVNTP (237 aa)) are pyrophosphorylase. Residues 13 to 16 (LAAG), K27, Q78, and 83 to 84 (GT) contribute to the UDP-N-acetyl-alpha-D-glucosamine site. D109 contributes to the Mg(2+) binding site. The UDP-N-acetyl-alpha-D-glucosamine site is built by G146, E160, N177, and N235. Position 235 (N235) interacts with Mg(2+). The linker stretch occupies residues 238–258 (AELMRSEELLRENIVTRHLHN). An N-acetyltransferase region spans residues 259–460 (GVHVHAAGSV…QKNLRKTRHS (202 aa)). Residues R341 and K359 each contribute to the UDP-N-acetyl-alpha-D-glucosamine site. Residue H371 is the Proton acceptor of the active site. UDP-N-acetyl-alpha-D-glucosamine-binding residues include Y374 and N385. Acetyl-CoA-binding positions include A388, 394-395 (NY), S413, A431, and R448.

It in the N-terminal section; belongs to the N-acetylglucosamine-1-phosphate uridyltransferase family. In the C-terminal section; belongs to the transferase hexapeptide repeat family. As to quaternary structure, homotrimer. It depends on Mg(2+) as a cofactor.

It is found in the cytoplasm. The catalysed reaction is alpha-D-glucosamine 1-phosphate + acetyl-CoA = N-acetyl-alpha-D-glucosamine 1-phosphate + CoA + H(+). It carries out the reaction N-acetyl-alpha-D-glucosamine 1-phosphate + UTP + H(+) = UDP-N-acetyl-alpha-D-glucosamine + diphosphate. Its pathway is nucleotide-sugar biosynthesis; UDP-N-acetyl-alpha-D-glucosamine biosynthesis; N-acetyl-alpha-D-glucosamine 1-phosphate from alpha-D-glucosamine 6-phosphate (route II): step 2/2. The protein operates within nucleotide-sugar biosynthesis; UDP-N-acetyl-alpha-D-glucosamine biosynthesis; UDP-N-acetyl-alpha-D-glucosamine from N-acetyl-alpha-D-glucosamine 1-phosphate: step 1/1. It functions in the pathway bacterial outer membrane biogenesis; LPS lipid A biosynthesis. Functionally, catalyzes the last two sequential reactions in the de novo biosynthetic pathway for UDP-N-acetylglucosamine (UDP-GlcNAc). The C-terminal domain catalyzes the transfer of acetyl group from acetyl coenzyme A to glucosamine-1-phosphate (GlcN-1-P) to produce N-acetylglucosamine-1-phosphate (GlcNAc-1-P), which is converted into UDP-GlcNAc by the transfer of uridine 5-monophosphate (from uridine 5-triphosphate), a reaction catalyzed by the N-terminal domain. The polypeptide is Bifunctional protein GlmU (Oleidesulfovibrio alaskensis (strain ATCC BAA-1058 / DSM 17464 / G20) (Desulfovibrio alaskensis)).